The following is an 86-amino-acid chain: Large ribosomal subunit protein bL27 (86 aa).

Positions 1 to 24 (MAHKKAMGSTENTRDSNPSYLGVK) are disordered. Residues 9–19 (STENTRDSNPS) are compositionally biased toward polar residues.

This sequence belongs to the bacterial ribosomal protein bL27 family.

In Salinibacter ruber (strain DSM 13855 / M31), this protein is Large ribosomal subunit protein bL27.